The following is a 256-amino-acid chain: Protein FixA (256 aa).

It belongs to the ETF beta-subunit/FixA family. In terms of assembly, heterodimer of FixA and FixB.

Its pathway is amine and polyamine metabolism; carnitine metabolism. Its function is as follows. Required for anaerobic carnitine reduction. May bring reductant to CaiA. This is Protein FixA from Salmonella paratyphi B (strain ATCC BAA-1250 / SPB7).